The following is a 336-amino-acid chain: Inactive serine/threonine-protein kinase PLK5 (336 aa).

A Protein kinase; truncated domain is found at 1-65 (MYTVLTGTPP…LDHLLQDDFF (65 aa)). Disordered stretches follow at residues 109–135 (PCPFTPKEASGPGEGGPDPDSMEWDGE) and 224–245 (GRTGRHPHGPATPRREGTLPTP). The POLO box domain occupies 255–336 (LLRFLASEHA…HHALRMLQSI (82 aa)).

This sequence belongs to the protein kinase superfamily. Ser/Thr protein kinase family. CDC5/Polo subfamily. Expressed in the brain, neurons and glial cells. Also expressed in highly differentiated cells, such as the serous acini in the parotid gland, distal and proximal tubules of the kidney, tubules of the seminal gland, Kupffer cells and some hepatocytes in the liver, and some cells in the germinal center of lymph nodes (at protein level).

Its subcellular location is the nucleus. It localises to the nucleolus. The protein localises to the cytoplasm. In terms of biological role, inactive serine/threonine-protein kinase that plays a role in cell cycle progression and neuronal differentiation. This is Inactive serine/threonine-protein kinase PLK5 (PLK5) from Homo sapiens (Human).